Consider the following 277-residue polypeptide: Large ribosomal subunit protein uL2cz/uL2cy (277 aa).

Disordered stretches follow at residues 1-31 and 227-277; these read MAIH…NTRK and NPVD…RRSK.

This sequence belongs to the universal ribosomal protein uL2 family. Part of the 50S ribosomal subunit.

The protein resides in the plastid. It localises to the chloroplast. In Manihot esculenta (Cassava), this protein is Large ribosomal subunit protein uL2cz/uL2cy (rpl2-A).